Reading from the N-terminus, the 757-residue chain is RNA-directed RNA polymerase catalytic subunit (757 aa).

The tract at residues 56–78 is disordered; that stretch reads TTNTETGAHQLNPIDGPLPEDNE. 2 short sequence motifs (nuclear localization signal) span residues 187–195 and 203–216; these read RKRRVRDNM and RTIG…NKRS. The interval 249–256 is promoter-binding site; that stretch reads RGFVYFVE. One can recognise a RdRp catalytic domain in the interval 286–483; the sequence is VRKMMTNSQD…GINMSKKKSY (198 aa).

The protein belongs to the influenza viruses polymerase PB1 family. In terms of assembly, influenza RNA polymerase is composed of three subunits: PB1, PB2 and PA. Interacts (via N-terminus) with PA (via C-terminus). Interacts (via C-terminus) with PB2 (via N-terminus); this interaction is essential for transcription initiation. In terms of processing, phosphorylated by host PRKCA.

It is found in the host nucleus. The protein resides in the host cytoplasm. It carries out the reaction RNA(n) + a ribonucleoside 5'-triphosphate = RNA(n+1) + diphosphate. Its function is as follows. RNA-dependent RNA polymerase which is responsible for replication and transcription of virus RNA segments. The transcription of viral mRNAs occurs by a unique mechanism called cap-snatching. 5' methylated caps of cellular mRNAs are cleaved after 10-13 nucleotides by PA. In turn, these short capped RNAs are used as primers by PB1 for transcription of viral mRNAs. During virus replication, PB1 initiates RNA synthesis and copy vRNA into complementary RNA (cRNA) which in turn serves as a template for the production of more vRNAs. The sequence is that of RNA-directed RNA polymerase catalytic subunit from Aves (Human).